We begin with the raw amino-acid sequence, 64 residues long: Conotoxin Cal12.4 (64 aa).

The first 21 residues, 1–21 (MKLTCMLVVLLLVLPFGDLIA), serve as a signal peptide directing secretion.

The protein belongs to the conotoxin O1 superfamily. In terms of processing, contains 4 disulfide bonds. As to expression, expressed by the venom duct.

The protein localises to the secreted. Functionally, probable neurotoxin. The chain is Conotoxin Cal12.4 from Californiconus californicus (California cone).